The sequence spans 229 residues: Large ribosomal subunit protein uL1 (229 aa).

This sequence belongs to the universal ribosomal protein uL1 family. As to quaternary structure, part of the 50S ribosomal subunit.

In terms of biological role, binds directly to 23S rRNA. The L1 stalk is quite mobile in the ribosome, and is involved in E site tRNA release. Protein L1 is also a translational repressor protein, it controls the translation of the L11 operon by binding to its mRNA. The polypeptide is Large ribosomal subunit protein uL1 (Streptococcus pneumoniae (strain ATCC 700669 / Spain 23F-1)).